A 218-amino-acid polypeptide reads, in one-letter code: Glutathione S-transferase class-mu 26 kDa isozyme (218 aa).

The GST N-terminal domain maps to serine 2–glycine 83. Residues tyrosine 7–tryptophan 8, tryptophan 41–lysine 45, asparagine 54–leucine 55, and glutamine 67–serine 68 each bind glutathione. A GST C-terminal domain is found at cysteine 85–leucine 203. Residue tyrosine 111 coordinates substrate.

Belongs to the GST superfamily. Mu family. Homodimer.

The catalysed reaction is RX + glutathione = an S-substituted glutathione + a halide anion + H(+). Conjugation of reduced glutathione to a wide number of exogenous and endogenous hydrophobic electrophiles. Its function is as follows. GST isoenzymes appear to play a central role in the parasite detoxification system. Other functions are also suspected including a role in increasing the solubility of haematin in the parasite gut. This Schistosoma japonicum (Blood fluke) protein is Glutathione S-transferase class-mu 26 kDa isozyme.